A 353-amino-acid polypeptide reads, in one-letter code: Protein RecA (353 aa).

65–72 (GPESSGKT) is a binding site for ATP.

It belongs to the RecA family.

The protein resides in the cytoplasm. Its function is as follows. Can catalyze the hydrolysis of ATP in the presence of single-stranded DNA, the ATP-dependent uptake of single-stranded DNA by duplex DNA, and the ATP-dependent hybridization of homologous single-stranded DNAs. It interacts with LexA causing its activation and leading to its autocatalytic cleavage. In Aeromonas salmonicida (strain A449), this protein is Protein RecA.